We begin with the raw amino-acid sequence, 20 residues long: Superoxide dismutase [Fe] (20 aa).

The protein belongs to the iron/manganese superoxide dismutase family. As to quaternary structure, homodimer. Fe cation is required as a cofactor.

Its subcellular location is the periplasm. It catalyses the reaction 2 superoxide + 2 H(+) = H2O2 + O2. Its function is as follows. Destroys superoxide anion radicals which are normally produced within the cells and which are toxic to biological systems. The polypeptide is Superoxide dismutase [Fe] (sodB) (Photobacterium damsela subsp. piscicida (Pasteurella piscicida)).